A 698-amino-acid chain; its full sequence is MYRTRSSDEVTTSTDLTSSSDVATSVDPTTSVISSTSADPTTSADSTTSTVQTTSAGPSNNIGNSTLANSTTFAVSSTSIDPTSSSDVITSTVQTTSIEPTTSLVSSNDITTSTSLNISVVISTSTDSTSLIESTTTVGPHASSSVAGMYRTRSSDEVTTSTDPTSSSDVATSADPTSSSAVTTLVDPTTSVVISTSVDQTSSSDVATSVDPTTSVISSTSADPTTSADSTTSTVQTTSVDPTSSVVSSAPVDPASSVVSLTSSYPTSSSTVTISANSNGSATLAAQTTSIDPVSSIVSSSGATTIISSASIDPASSVVSSTSSEPTSFIVSSTSVYSTRPSGPTTSTDLATFSDTIILRVSTTSTSQDTQTVSSSLTDMVSSTGSADLSVSSIQRSQVDPSTFAVSNSPVYPTASTGSTSTGIPIASESLSLSRQQGISATSSSSIVTLTPVDSASSSRSSATSIIKPNMPVSSNDSKTQSSVSVVDAFQSTKSSYPSITSADPTTLASENGLVGSSSSAHPITLDRTYASAHASVTDIVSRVTDSTRHTTLVTSNINIQSEVGNPNYSGPKDTTITKQSAFMTSPASTSTISNVQSTASVMNHSIEDNISAAASLESVSGTSTKDYSSQSSAIHYTNSFTTTTTNAFITSKHSIAAVSTGAITSSASISLIMEGSANIEAVGKLVWLAAALPLAFI.

Disordered stretches follow at residues 1-65 (MYRT…IGNS), 133-183 (ESTT…SAVT), 197-274 (SVDQ…TVTI), and 455-480 (SASS…DSKT). Low complexity-rich tracts occupy residues 9–56 (EVTT…TTSA) and 158–183 (VTTS…SAVT). Low complexity predominate over residues 455–465 (SASSSRSSATS).

The polypeptide is Pheromone-regulated protein PRM7 (PRM7) (Saccharomyces cerevisiae (strain ATCC 204508 / S288c) (Baker's yeast)).